Reading from the N-terminus, the 211-residue chain is Ribonuclease T (211 aa).

The 175-residue stretch at 24–198 (VVVDVETGGF…YDAEKTAHLF (175 aa)) folds into the Exonuclease domain. Residues aspartate 27, glutamate 29, histidine 185, and aspartate 190 each coordinate Mg(2+). The active-site Proton donor/acceptor is histidine 185.

Belongs to the RNase T family. In terms of assembly, homodimer. The cofactor is Mg(2+).

In terms of biological role, trims short 3' overhangs of a variety of RNA species, leaving a one or two nucleotide 3' overhang. Responsible for the end-turnover of tRNA: specifically removes the terminal AMP residue from uncharged tRNA (tRNA-C-C-A). Also appears to be involved in tRNA biosynthesis. This is Ribonuclease T from Xylella fastidiosa (strain 9a5c).